The sequence spans 219 residues: Probable GTP-binding protein EngB (219 aa).

Residues 24–207 (VQPEIAFAGR…HELIESWLRP (184 aa)) form the EngB-type G domain. GTP is bound by residues 32 to 39 (GRSNAGKS), 59 to 63 (GRTQH), 81 to 84 (DLPG), 148 to 151 (TKCD), and 186 to 188 (FSA). The Mg(2+) site is built by S39 and T61.

This sequence belongs to the TRAFAC class TrmE-Era-EngA-EngB-Septin-like GTPase superfamily. EngB GTPase family. Mg(2+) is required as a cofactor.

In terms of biological role, necessary for normal cell division and for the maintenance of normal septation. This Burkholderia vietnamiensis (strain G4 / LMG 22486) (Burkholderia cepacia (strain R1808)) protein is Probable GTP-binding protein EngB.